The primary structure comprises 272 residues: Ribosomal RNA small subunit methyltransferase A (272 aa).

S-adenosyl-L-methionine-binding residues include Asn16, Leu18, Gly43, Glu64, Asp89, and Asn110.

It belongs to the class I-like SAM-binding methyltransferase superfamily. rRNA adenine N(6)-methyltransferase family. RsmA subfamily.

The protein localises to the cytoplasm. The enzyme catalyses adenosine(1518)/adenosine(1519) in 16S rRNA + 4 S-adenosyl-L-methionine = N(6)-dimethyladenosine(1518)/N(6)-dimethyladenosine(1519) in 16S rRNA + 4 S-adenosyl-L-homocysteine + 4 H(+). Functionally, specifically dimethylates two adjacent adenosines (A1518 and A1519) in the loop of a conserved hairpin near the 3'-end of 16S rRNA in the 30S particle. May play a critical role in biogenesis of 30S subunits. The chain is Ribosomal RNA small subunit methyltransferase A from Pseudomonas fluorescens (strain Pf0-1).